Here is a 393-residue protein sequence, read N- to C-terminus: 6-hydroxy-3-succinoylpyridine 3-monooxygenase HspB (393 aa).

Residues 6-35 (RVII…VLEA) and 277-287 (MRNGRVILIGD) each bind FAD.

Belongs to the PheA/TfdB FAD monooxygenase family. As to quaternary structure, homodimer. It depends on FAD as a cofactor.

The catalysed reaction is 4-(6-hydroxypyridin-3-yl)-4-oxobutanoate + 2 NADH + O2 + 2 H(+) = 2,5-dihydroxypyridine + succinate semialdehyde + 2 NAD(+) + H2O. The protein operates within alkaloid degradation; nicotine degradation. With respect to regulation, inhibited by Cu(2+) and Zn(2+). In terms of biological role, involved in the nicotine degradation. Catalyzes the cleavage of 6-hydroxy-3-succinoylpyridine (HSP) by incorporation of oxygen at the 3-position to produce to 2,5-dihydroxypyridine (DHP) and succinic semialdehyde. In Pseudomonas putida (strain DSM 28022 / S16), this protein is 6-hydroxy-3-succinoylpyridine 3-monooxygenase HspB.